The following is a 127-amino-acid chain: Glycine cleavage system H protein 1 (127 aa).

Positions 20-101 (SVTVGITAYA…MGEGWFFRFI (82 aa)) constitute a Lipoyl-binding domain. Position 60 is an N6-lipoyllysine (lysine 60).

It belongs to the GcvH family. As to quaternary structure, the glycine cleavage system is composed of four proteins: P, T, L and H. (R)-lipoate is required as a cofactor.

The glycine cleavage system catalyzes the degradation of glycine. The H protein shuttles the methylamine group of glycine from the P protein to the T protein. The protein is Glycine cleavage system H protein 1 of Pseudomonas putida (strain ATCC 47054 / DSM 6125 / CFBP 8728 / NCIMB 11950 / KT2440).